The primary structure comprises 113 residues: Small ribosomal subunit protein uS17 (113 aa).

It belongs to the universal ribosomal protein uS17 family. In terms of assembly, part of the 30S ribosomal subunit.

One of the primary rRNA binding proteins, it binds specifically to the 5'-end of 16S ribosomal RNA. In Pyrococcus abyssi (strain GE5 / Orsay), this protein is Small ribosomal subunit protein uS17.